The following is a 206-amino-acid chain: Holliday junction branch migration complex subunit RuvA (206 aa).

A domain I region spans residues 1–64 (MIGRLTGNLV…ETSQQLFGFI (64 aa)). The interval 65–142 (DQQDREFFRM…SWQVTPSVDA (78 aa)) is domain II. The segment at 143–154 (TGSLVALDSAAP) is flexible linker. The segment at 155 to 206 (SQNAIVAEAESALVALGYKPVEASKAVARVTSDEITRSEDLIRLALRNMIPA) is domain III.

This sequence belongs to the RuvA family. Homotetramer. Forms an RuvA(8)-RuvB(12)-Holliday junction (HJ) complex. HJ DNA is sandwiched between 2 RuvA tetramers; dsDNA enters through RuvA and exits via RuvB. An RuvB hexamer assembles on each DNA strand where it exits the tetramer. Each RuvB hexamer is contacted by two RuvA subunits (via domain III) on 2 adjacent RuvB subunits; this complex drives branch migration. In the full resolvosome a probable DNA-RuvA(4)-RuvB(12)-RuvC(2) complex forms which resolves the HJ.

Its subcellular location is the cytoplasm. Functionally, the RuvA-RuvB-RuvC complex processes Holliday junction (HJ) DNA during genetic recombination and DNA repair, while the RuvA-RuvB complex plays an important role in the rescue of blocked DNA replication forks via replication fork reversal (RFR). RuvA specifically binds to HJ cruciform DNA, conferring on it an open structure. The RuvB hexamer acts as an ATP-dependent pump, pulling dsDNA into and through the RuvAB complex. HJ branch migration allows RuvC to scan DNA until it finds its consensus sequence, where it cleaves and resolves the cruciform DNA. This is Holliday junction branch migration complex subunit RuvA from Teredinibacter turnerae (strain ATCC 39867 / T7901).